Consider the following 407-residue polypeptide: MFSKIIQSYAKGNLIVQICIGIALGILIGISSKEISEIANLLGILFTSALKAIAPMLVFILILTSICTKDFSQSGAKIKNIIILYIVGTFFASACAVLANFFFPVKLVLDGVQTATNSSPTHMSDIFKDLLFKIVDNPINALSSGNYLGILTWAIAGGIALKHCSNEAKQVFIDINEGVLKIVKFVVKLAPFGIFGLVANSVAQTGAQGLLSYVKLLILLVATMLFVTFVINALIVFFYTRKNPFPLIFICLRHSAFFAFFTRSSAANIPVNMALCAKLGIDKEFYGISIPLGATINMAGAAVTIAILSLTAANTVGIEISLLQAFLLSIIATFAACGASGVAGGSLLLIPLACSLFNIDYDIAMKVVAIGFIIGVIQDSVETALNSSTDVLFTAICSKNELNYNIK.

9 helical membrane passes run 12–32 (GNLI…GISS), 42–62 (LGIL…FILI), 81–101 (IIIL…LANF), 141–161 (ALSS…GIAL), 179–199 (VLKI…GLVA), 218–238 (ILLV…IVFF), 245–267 (FPLI…SSAA), 288–308 (ISIP…IAIL), and 330–350 (IIAT…LLLI).

It belongs to the dicarboxylate/amino acid:cation symporter (DAACS) (TC 2.A.23) family.

It is found in the cell inner membrane. The enzyme catalyses L-serine(in) + Na(+)(in) = L-serine(out) + Na(+)(out). It catalyses the reaction L-threonine(in) + Na(+)(in) = L-threonine(out) + Na(+)(out). Functionally, involved in the import of serine and threonine into the cell, with the concomitant import of sodium (symport system). This chain is Serine/threonine transporter SstT, found in Campylobacter jejuni subsp. jejuni serotype O:2 (strain ATCC 700819 / NCTC 11168).